The sequence spans 94 residues: MAFGTDPTPDGLANPPIDDLMKHADSKYALAIFAAKRARQINSYFTQLNEGLLQNVGPLVEYQNNEKPLSIAFREIDEGLLEETLGEDDANEGN.

The protein belongs to the RNA polymerase subunit omega family. The RNAP catalytic core consists of 2 alpha, 1 beta, 1 beta' and 1 omega subunit. When a sigma factor is associated with the core the holoenzyme is formed, which can initiate transcription.

The enzyme catalyses RNA(n) + a ribonucleoside 5'-triphosphate = RNA(n+1) + diphosphate. Functionally, promotes RNA polymerase assembly. Latches the N- and C-terminal regions of the beta' subunit thereby facilitating its interaction with the beta and alpha subunits. In Bifidobacterium longum subsp. infantis (strain ATCC 15697 / DSM 20088 / JCM 1222 / NCTC 11817 / S12), this protein is DNA-directed RNA polymerase subunit omega.